Reading from the N-terminus, the 505-residue chain is MDLILLEKSLLAVFFAVIFSIIVSKLRGKKLKLPPGPFPVPVFGNWIQVGDDLNHRNLAGLAKKFGDIFLLRMGQRNLVVVSSPDLARDVLHTHGVEFGSRTRNVVFDIFTGKGQDMVFTVYGEHWRKMRRIMTVPFFTNKVVNQYRFGWEEEAARVVEDVKKDPMAAAEGIVLRRRLQLLMYNNMYRIMFDRRFESVDDPLFLKLTALNGERSRLAQSFEYNYGDFIPILRPFLRGYLKICKQVKERRFKLFKDYFLEERKKLASTKPTDNAGLKCAIDHILDAEKKGEINEDNVLYIVENINVAAIETTLWSIEWGIAELVNHPNVQQKLRNELDAVLGPGVQITEPDTYRLPYLQAVIKETLRLRMAIPLLVPHMNLYDAKLGSYDIPAESKILVNAWWLANNPAHWKDPQEFRPERFLEEEAKVEANGNDFRYIPFGVGRRSCPGIILALPILGITIGRLVQNFELLPPPGQDKLDTTEKGGQFSLHILKHSTIVAKPRVF.

A helical membrane pass occupies residues leucine 3–valine 23. (E)-cinnamate is bound by residues arginine 213 to glutamine 218 and alanine 306. Cysteine 447 is a binding site for heme.

It belongs to the cytochrome P450 family. Requires heme as cofactor. As to expression, mostly expressed in stems, and, to a lower extent, in bulbs, roots, leaves and flowers.

It localises to the membrane. It carries out the reaction (E)-cinnamate + reduced [NADPH--hemoprotein reductase] + O2 = (E)-4-coumarate + oxidized [NADPH--hemoprotein reductase] + H2O + H(+). Its pathway is alkaloid biosynthesis. The protein operates within phenylpropanoid metabolism; trans-4-coumarate biosynthesis; trans-4-coumarate from trans-cinnamate: step 1/1. Its function is as follows. Catalyzes the first oxidative step of the phenylpropanoid pathway in higher plants by transforming trans-cinnamate into p-coumarate. The compounds formed by this pathway are essential components for lignification, pollination, and defense against ultraviolet light, predators and pathogens. Trans-4-coumarate is a precursor to all amaryllidaceae alkaloids such as galanthamine, lycorine and haemanthamine, and including haemanthamine- and crinamine-type alkaloids, promising anticancer agents. The sequence is that of Trans-cinnamate 4-monooxygenase from Narcissus pseudonarcissus (Daffodil).